Reading from the N-terminus, the 222-residue chain is Physcion biosynthesis cluster O-methyltransferase (222 aa).

It belongs to the methyltransferase superfamily.

It catalyses the reaction emodin + S-adenosyl-L-methionine = physcion + S-adenosyl-L-homocysteine. Its pathway is secondary metabolite biosynthesis. Its function is as follows. O-methyltransferase; part of the gene cluster that mediates the biosynthesis of physcion, a natural anthraquinone fungicide that can prevent plant fungal infections. Within the pathway, the O-methyltransferase AcOMT catalyzes the last step by transferring a methyl group to C-6 hydroxyl of emodin to form physcion. AcOMT may also methylate the C-6 hydroxyl group of emodin anthrone to produce physcion-anthrone B. The pathway begins with the polyketide synthase AcPKS that condenses 8 malonyl-CoA units to synthesize atrochrysone thioester which is released from the synthase by the atrochrysone carboxyl ACP thioesterase AcTE that breaks the thioester bond and leads to free atrochrysone carboxylic acid. Spontaneous decarboxylation of atrochrysone carboxylic acid leads to the formation of atrochrysone. Then, atrochrysone undergoes spontaneous dehydration and oxidation, giving the products emodin anthrone and emodin. The O-methyltransferase AcOMT then methylates the C-6 hydroxyl of emodin to form physcion. This is Physcion biosynthesis cluster O-methyltransferase from Aspergillus chevalieri (Eurotium chevalieri).